Here is a 500-residue protein sequence, read N- to C-terminus: Protein dcd1B (500 aa).

The signal sequence occupies residues 1–20 (MNLIKLFIICCLLISITVKS). Residues Asn-284, Asn-331, Asn-441, Asn-459, Asn-474, and Asn-475 are each glycosylated (N-linked (GlcNAc...) asparagine). The tract at residues 464-500 (FSEQPPLPPPNNSSSSDSNSNSNSDSSSSSDSNSNSN) is disordered. A compositionally biased stretch (low complexity) spans 475-500 (NSSSSDSNSNSNSDSSSSSDSNSNSN).

The protein resides in the secreted. This Dictyostelium discoideum (Social amoeba) protein is Protein dcd1B (dcd1B).